The sequence spans 137 residues: Nucleoside diphosphate kinase (137 aa).

Residues Lys9, Phe57, Arg85, Thr91, Arg102, and Asn112 each coordinate ATP. His115 (pros-phosphohistidine intermediate) is an active-site residue.

This sequence belongs to the NDK family. As to quaternary structure, homotetramer. It depends on Mg(2+) as a cofactor.

Its subcellular location is the cytoplasm. It catalyses the reaction a 2'-deoxyribonucleoside 5'-diphosphate + ATP = a 2'-deoxyribonucleoside 5'-triphosphate + ADP. It carries out the reaction a ribonucleoside 5'-diphosphate + ATP = a ribonucleoside 5'-triphosphate + ADP. Major role in the synthesis of nucleoside triphosphates other than ATP. The ATP gamma phosphate is transferred to the NDP beta phosphate via a ping-pong mechanism, using a phosphorylated active-site intermediate. The protein is Nucleoside diphosphate kinase of Nitratiruptor sp. (strain SB155-2).